Here is a 297-residue protein sequence, read N- to C-terminus: Formylmethanofuran--tetrahydromethanopterin formyltransferase-like protein (297 aa).

This sequence belongs to the FTR family.

The polypeptide is Formylmethanofuran--tetrahydromethanopterin formyltransferase-like protein (ehaS) (Methanothermobacter thermautotrophicus (strain ATCC 29096 / DSM 1053 / JCM 10044 / NBRC 100330 / Delta H) (Methanobacterium thermoautotrophicum)).